We begin with the raw amino-acid sequence, 466 residues long: MEKSRVAPKSKVDTVANLAKRRGLVYPCGEIYGGTKSAWDYGPLGVELKENIKRQWWRSMVTSREDVVGLDSSVILPRQVWEASGHVATFTDPLVESLITHKRYRADHLLEAYEEKHGHPPANGLADIRDPETGEPGRWTEPRNFSGLLKTFLGPVDDEEGLHYLRPETAQGIFINYKNVETTARKKPPFGIAQIGKSFRNEITPGNFIFRTREFEQMEMEFFVKPGEDEQWHQYWIDTRLAWYTDLGIDPENLRLYEHPKEKLSHYSTRTVDIEYRFRFQGSEWGELEGVANRTDYDLKTHSEHSGTELSYFDQANNERYIPYVIEPAAGLTRSLMAFLVDAYAEDEAPNAKGGVDVRTVLRLDRRLAPVKAAVLPLSRNADLTPKAKDLAAQLRKHWNVEFDDAGAIGRRYRRQDEIGTPFCITVDFDTLEDQAVTIRERDSMAQERIALDKVEGYLAQHLIGV.

Residues Arg105 and Glu168 each coordinate substrate. Residues 200-202 (RNE), 210-215 (FRTREF), 287-288 (EL), and 331-334 (GLTR) contribute to the ATP site. Residue 215–219 (FEQME) participates in substrate binding. Residue 327 to 331 (EPAAG) coordinates substrate.

It belongs to the class-II aminoacyl-tRNA synthetase family. Homodimer.

It localises to the cytoplasm. It catalyses the reaction tRNA(Gly) + glycine + ATP = glycyl-tRNA(Gly) + AMP + diphosphate. Its function is as follows. Catalyzes the attachment of glycine to tRNA(Gly). The polypeptide is Glycine--tRNA ligase (Nocardia farcinica (strain IFM 10152)).